A 71-amino-acid polypeptide reads, in one-letter code: UPF0434 protein Meso_3270 (71 aa).

Belongs to the UPF0434 family.

The polypeptide is UPF0434 protein Meso_3270 (Chelativorans sp. (strain BNC1)).